The primary structure comprises 807 residues: Putative transmembrane protein ORF807 (807 aa).

A run of 5 helical transmembrane segments spans residues 210 to 230, 234 to 254, 270 to 290, 459 to 479, and 657 to 677; these read VLML…SDIL, GLST…IVYF, VTIQ…FVIL, ILIG…LVLT, and VALL…MPLV.

It is found in the host membrane. The chain is Putative transmembrane protein ORF807 from Acidianus filamentous virus 1 (isolate United States/Yellowstone) (AFV-1).